The primary structure comprises 519 residues: Cilia- and flagella-associated protein 53 (519 aa).

Coiled-coil stretches lie at residues 80–107 (NRHL…LLES) and 210–339 (LAKE…QEEQ). Residues 498–519 (TTAVHPFRRRDRRCSSSGGQMS) form a disordered region.

Belongs to the CFAP53 family.

It localises to the cytoplasm. The protein resides in the cytoskeleton. It is found in the cilium axoneme. The protein localises to the cilium basal body. Microtubule inner protein (MIP) part of the dynein-decorated doublet microtubules (DMTs) in cilia axoneme, which is required for motile cilia beating. Regulates motility patterns of both 9+0 and 9+2 motile cilia through differential localization and recruitment of axonemal dynein components. Required for cilium motility within the spinal canal and Kuppfer's vesicle and is involved in the establishment of left-right symmetry during embryogenesis. The sequence is that of Cilia- and flagella-associated protein 53 from Danio rerio (Zebrafish).